The primary structure comprises 198 residues: Pyridoxal 5'-phosphate synthase subunit PdxT (198 aa).

49–51 (GES) is an L-glutamine binding site. Catalysis depends on cysteine 81, which acts as the Nucleophile. L-glutamine-binding positions include arginine 113 and 141-142 (IR). Catalysis depends on charge relay system residues histidine 177 and glutamate 179.

It belongs to the glutaminase PdxT/SNO family. In the presence of PdxS, forms a dodecamer of heterodimers. Only shows activity in the heterodimer.

It catalyses the reaction aldehydo-D-ribose 5-phosphate + D-glyceraldehyde 3-phosphate + L-glutamine = pyridoxal 5'-phosphate + L-glutamate + phosphate + 3 H2O + H(+). The enzyme catalyses L-glutamine + H2O = L-glutamate + NH4(+). It participates in cofactor biosynthesis; pyridoxal 5'-phosphate biosynthesis. In terms of biological role, catalyzes the hydrolysis of glutamine to glutamate and ammonia as part of the biosynthesis of pyridoxal 5'-phosphate. The resulting ammonia molecule is channeled to the active site of PdxS. The protein is Pyridoxal 5'-phosphate synthase subunit PdxT of Mycobacterium tuberculosis (strain ATCC 25177 / H37Ra).